Here is a 373-residue protein sequence, read N- to C-terminus: MTEVLWPAVPNGTDTAFLADPGSPWGNSTVTSTAAVASPFKCALTKTGFQFYYLPAVYILVFIIGFLGNSVAIWMFVFHMKPWSGISVYMFNLALADFLYVLTLPALIFYYFNKTDWIFGDAMCKLQRFIFHVNLYGSILFLTCISAHRYSGVVYPLKSLGRLKKKNAVYISVLVWLIVVVGISPILFYSGTGIRKNKTITCYDTTSDEYLRSYFIYSMCTTVAMFCVPLVLILGCYGLIVRALIYKDLDNSPLRRKSIYLVIIVLTVFAVSYIPFHVMKTMNLRARLDFQTPEMCAFNDRVYATYQVTRGLASLNSCVDPILYFLAGDTFRRRLSRATRKASRRSEANLQSKSEDMTLNILSEFKQNGDTSL.

At 1-51 the chain is on the extracellular side; that stretch reads MTEVLWPAVPNGTDTAFLADPGSPWGNSTVTSTAAVASPFKCALTKTGFQF. N-linked (GlcNAc...) asparagine glycosylation is found at N11 and N27. Disulfide bonds link C42–C296 and C124–C202. Residue K46 coordinates ADP. A helical transmembrane segment spans residues 52-74; it reads YYLPAVYILVFIIGFLGNSVAIW. At 75-87 the chain is on the cytoplasmic side; it reads MFVFHMKPWSGIS. The helical transmembrane segment at 88–109 threads the bilayer; that stretch reads VYMFNLALADFLYVLTLPALIF. The Extracellular segment spans residues 110-125; that stretch reads YYFNKTDWIFGDAMCK. N113 is a glycosylation site (N-linked (GlcNAc...) asparagine). A helical transmembrane segment spans residues 126–147; sequence LQRFIFHVNLYGSILFLTCISA. Over 148–166 the chain is Cytoplasmic; sequence HRYSGVVYPLKSLGRLKKK. Residues 167 to 188 traverse the membrane as a helical segment; sequence NAVYISVLVWLIVVVGISPILF. The Extracellular segment spans residues 189–214; that stretch reads YSGTGIRKNKTITCYDTTSDEYLRSY. N197 carries an N-linked (GlcNAc...) asparagine glycan. 203-205 is an ADP binding site; the sequence is YDT. A helical transmembrane segment spans residues 215–237; the sequence is FIYSMCTTVAMFCVPLVLILGCY. Residues 238–260 are Cytoplasmic-facing; the sequence is GLIVRALIYKDLDNSPLRRKSIY. Residues 261-284 traverse the membrane as a helical segment; that stretch reads LVIIVLTVFAVSYIPFHVMKTMNL. Residues 283-287, 303-306, and R310 each bind ADP; these read NLRAR and YATY. Topologically, residues 285-303 are extracellular; it reads RARLDFQTPEMCAFNDRVY. The chain crosses the membrane as a helical span at residues 304-325; sequence ATYQVTRGLASLNSCVDPILYF. The Cytoplasmic portion of the chain corresponds to 326 to 373; that stretch reads LAGDTFRRRLSRATRKASRRSEANLQSKSEDMTLNILSEFKQNGDTSL.

The protein belongs to the G-protein coupled receptor 1 family.

It localises to the cell membrane. Its function is as follows. Receptor for extracellular adenine nucleotides such as ADP. In platelets, binding to ADP leads to mobilization of intracellular calcium ions via activation of phospholipase C, a change in platelet shape, and ultimately platelet aggregation. In Bos taurus (Bovine), this protein is P2Y purinoceptor 1 (P2RY1).